We begin with the raw amino-acid sequence, 501 residues long: Ammonium transporter 2 member 2 (501 aa).

Helical transmembrane passes span 35–55 (VAAT…YGSI), 64–84 (SAFM…LVGF), 140–160 (LVLF…GSLL), 174–194 (LWLL…GFLY), 203–223 (GGYV…YWVG), 238–258 (ILLM…FNGG), 274–294 (TNVS…IFFG), 298–318 (VIGA…GAGL), 322–342 (WSAM…MMIL), 356–376 (LAVF…TGLL), and 412–432 (FVTV…GLFI).

The protein belongs to the ammonia transporter channel (TC 1.A.11.2) family.

The protein localises to the membrane. In terms of biological role, involved in ammonium transport. The protein is Ammonium transporter 2 member 2 (AMT2-2) of Oryza sativa subsp. japonica (Rice).